The following is a 185-amino-acid chain: Putative gustatory receptor clone PTE01 (185 aa).

The chain crosses the membrane as a helical span at residues 1–11 (MYLFLSNLSLA). Residues 12–42 (DISFTSTTLPKMIVDIQTNNRAISYSGCLTQ) lie on the Extracellular side of the membrane. The chain crosses the membrane as a helical span at residues 43–62 (MSFFMLFGCLDSLLLTAMAY). At 63–84 (DRFVAICHPLHYQVIMNPRLCG) the chain is on the cytoplasmic side. A helical membrane pass occupies residues 85 to 105 (LLVFLSILISLLVSQLHNSVV). The Extracellular portion of the chain corresponds to 106-138 (LQLTYFKSVDISHFFCDPSLLLNLACSDTFTNN). The helical transmembrane segment at 139–160 (IVMYFVGAISGFLPISGIFFSY) threads the bilayer. Topologically, residues 161-182 (YKIVSSILRMPSPGGKYKAFST) are cytoplasmic. The chain crosses the membrane as a helical span at residues 183–185 (CGS).

This sequence belongs to the G-protein coupled receptor 1 family. Tongue specific.

The protein resides in the cell membrane. Functionally, possible taste receptor. In Rattus norvegicus (Rat), this protein is Putative gustatory receptor clone PTE01.